The sequence spans 304 residues: Non-specific ribonucleoside hydrolase RihC (304 aa).

The active site involves H233.

This sequence belongs to the IUNH family. RihC subfamily.

In terms of biological role, hydrolyzes both purine and pyrimidine ribonucleosides with a broad-substrate specificity. This Shigella sonnei (strain Ss046) protein is Non-specific ribonucleoside hydrolase RihC.